Consider the following 611-residue polypeptide: Alpha-1,2-mannosyltransferase ALG9 (611 aa).

The segment covering 1-10 has biased composition (basic residues); that stretch reads MASRRARQRL. The interval 1 to 51 is disordered; the sequence is MASRRARQRLKGGGGGGGGGGDAGPAAEKLEQLGSREAGAEPRPESGNKAG. Residues 1 to 135 are Lumenal-facing; that stretch reads MASRRARQRL…FHARILQTNK (135 aa). Over residues 11–23 the composition is skewed to gly residues; the sequence is KGGGGGGGGGGDA. N77 carries N-linked (GlcNAc...) asparagine glycosylation. A helical membrane pass occupies residues 136–156; the sequence is ILVFYFLRCLLAFVSCVCELY. The Cytoplasmic portion of the chain corresponds to 157-171; that stretch reads FYKAVCKKFGLHVSR. The helical transmembrane segment at 172–192 threads the bilayer; sequence MMLAFLVLSTGMFCSSSAFLP. The Lumenal segment spans residues 193–213; the sequence is SSFCMYTTLIAMTGWYMDKTP. The chain crosses the membrane as a helical span at residues 214-234; that stretch reads IAVLGVAAGAILGWPFSAALG. Over 235 to 249 the chain is Cytoplasmic; that stretch reads LPIAFDLLARKHRWK. Residues 250-270 form a helical membrane-spanning segment; sequence SFLLWSLVALALFLVPVVVID. At 271 to 310 the chain is on the lumenal side; sequence SYYYGKLVVAPLNIVLYNVFTSHGPDLYGTEPWYFYLING. Residues 311–331 traverse the membrane as a helical segment; sequence FLNFNVAFALALLVLPLTFLM. The Cytoplasmic portion of the chain corresponds to 332–342; sequence EYLLQRFHVQN. Residues 343-363 form a helical membrane-spanning segment; it reads LGHPYWLTLAPMYIWFIIFFI. Residues 364–370 are Lumenal-facing; sequence QPHKEER. Residues 371-391 traverse the membrane as a helical segment; that stretch reads FLFPVYPLICLCGAVALSALQ. Over 392-405 the chain is Cytoplasmic; that stretch reads KCYHFVFQRYRLEH. A helical transmembrane segment spans residues 406 to 426; the sequence is YTVTSNWLALGTVFLFGLLSF. The Lumenal segment spans residues 427 to 611; that stretch reads SRSVALFRGY…AKPSRKKSGG (185 aa). Residues N550 and N593 are each glycosylated (N-linked (GlcNAc...) asparagine).

This sequence belongs to the glycosyltransferase 22 family.

It localises to the endoplasmic reticulum membrane. It carries out the reaction an alpha-D-Man-(1-&gt;2)-alpha-D-Man-(1-&gt;2)-alpha-D-Man-(1-&gt;3)-[alpha-D-Man-(1-&gt;3)-alpha-D-Man-(1-&gt;6)]-beta-D-Man-(1-&gt;4)-beta-D-GlcNAc-(1-&gt;4)-alpha-D-GlcNAc-diphospho-di-trans,poly-cis-dolichol + a di-trans,poly-cis-dolichyl beta-D-mannosyl phosphate = an alpha-D-Man-(1-&gt;2)-alpha-D-Man-(1-&gt;2)-alpha-D-Man-(1-&gt;3)-[alpha-D-Man-(1-&gt;2)-alpha-D-Man-(1-&gt;3)-alpha-D-Man-(1-&gt;6)]-beta-D-Man-(1-&gt;4)-beta-D-GlcNAc-(1-&gt;4)-alpha-D-GlcNAc-diphospho-di-trans,poly-cis-dolichol + a di-trans,poly-cis-dolichyl phosphate + H(+). The enzyme catalyses an alpha-D-Man-(1-&gt;2)-alpha-D-Man-(1-&gt;2)-alpha-D-Man-(1-&gt;3)-[alpha-D-Man-(1-&gt;2)-alpha-D-Man-(1-&gt;3)-[alpha-D-Man-(1-&gt;6)]-alpha-D-Man-(1-&gt;6)]-beta-D-Man-(1-&gt;4)-beta-D-GlcNAc-(1-&gt;4)-alpha-D-GlcNAc-diphospho-di-trans,poly-cis-dolichol + a di-trans,poly-cis-dolichyl beta-D-mannosyl phosphate = an alpha-D-Man-(1-&gt;2)-alpha-D-Man-(1-&gt;2)-alpha-D-Man-(1-&gt;3)-[alpha-D-Man-(1-&gt;2)-alpha-D-Man-(1-&gt;3)-[alpha-D-Man-(1-&gt;2)-alpha-D-Man-(1-&gt;6)]-alpha-D-Man-(1-&gt;6)]-beta-D-Man-(1-&gt;4)-beta-D-GlcNAc-(1-&gt;4)-alpha-D-GlcNAc-diphospho-di-trans,poly-cis-dolichol + a di-trans,poly-cis-dolichyl phosphate + H(+). It functions in the pathway protein modification; protein glycosylation. In terms of biological role, mannosyltransferase that operates in the biosynthetic pathway of dolichol-linked oligosaccharides, the glycan precursors employed in protein asparagine (N)-glycosylation. The assembly of dolichol-linked oligosaccharides begins on the cytosolic side of the endoplasmic reticulum membrane and finishes in its lumen. The sequential addition of sugars to dolichol pyrophosphate produces dolichol-linked oligosaccharides containing fourteen sugars, including two GlcNAcs, nine mannoses and three glucoses. Once assembled, the oligosaccharide is transferred from the lipid to nascent proteins by oligosaccharyltransferases. In the lumen of the endoplasmic reticulum, catalyzes the addition of the seventh and ninth alpha-1,2-linked mannose residues to Man(6)GlcNAc(2)-PP-dolichol and Man(8)GlcNAc(2)-PP-dolichol respectively. The sequence is that of Alpha-1,2-mannosyltransferase ALG9 from Mus musculus (Mouse).